The sequence spans 198 residues: DNA polymerase zeta subunit 2 (198 aa).

Residues 4–196 (EIKADIIVEA…DLGLKMDVLI (193 aa)) form the HORMA domain.

The protein belongs to the MAD2 family. In terms of assembly, accessory subunit of the zeta DNA polymerase complex, which consists of the catalytic component PolZ1/DNApol-zeta and PolZ2/Rev7. Interacts with the apurinic/apyrimidinic (AP) endonuclease Rrp1 (via the N-terminus).

In terms of biological role, as the accessory component of the DNA polymerase zeta complex, involved in translesion DNA synthesis (TLS) and various DNA repair mechanisms. Promotes the apurinic/apyrimidinic (AP) endonuclease activity of Rrp1 and is therefore likely to be involved in the base excision repair (BER) pathway responsible for repair of DNA lesions. It does not appear to influence the synthesis activity of the catalytic component Dmpol-zeta. The sequence is that of DNA polymerase zeta subunit 2 from Drosophila melanogaster (Fruit fly).